Consider the following 147-residue polypeptide: Large ribosomal subunit protein uL13 (147 aa).

It belongs to the universal ribosomal protein uL13 family. Part of the 50S ribosomal subunit.

This protein is one of the early assembly proteins of the 50S ribosomal subunit, although it is not seen to bind rRNA by itself. It is important during the early stages of 50S assembly. The sequence is that of Large ribosomal subunit protein uL13 from Salinispora arenicola (strain CNS-205).